We begin with the raw amino-acid sequence, 194 residues long: Peptidyl-tRNA hydrolase (194 aa).

TRNA is bound at residue tyrosine 17. Histidine 22 functions as the Proton acceptor in the catalytic mechanism. Residues phenylalanine 68, asparagine 70, and asparagine 116 each coordinate tRNA.

Belongs to the PTH family. Monomer.

The protein resides in the cytoplasm. The enzyme catalyses an N-acyl-L-alpha-aminoacyl-tRNA + H2O = an N-acyl-L-amino acid + a tRNA + H(+). Hydrolyzes ribosome-free peptidyl-tRNAs (with 1 or more amino acids incorporated), which drop off the ribosome during protein synthesis, or as a result of ribosome stalling. Its function is as follows. Catalyzes the release of premature peptidyl moieties from peptidyl-tRNA molecules trapped in stalled 50S ribosomal subunits, and thus maintains levels of free tRNAs and 50S ribosomes. This Proteus mirabilis (strain HI4320) protein is Peptidyl-tRNA hydrolase.